Here is a 193-residue protein sequence, read N- to C-terminus: MQNYQLVLASTSPFRQQILAKLKLPFVTAKPDCDETPLIGETPEHLLMRLAENKARSCFLADPSLVIGSDQVCVIDDQIIGKPLTTEKAVEQLLRQSGQAITFYTGLALFNNQTQQTQVLCDTFTVHFRTLSESMARRYVEAEQPLHCAGSFKSEGLGIALFERLEGDDPNSLIGLPLIKLIQLLENEGLNVI.

D70 (proton acceptor) is an active-site residue.

The protein belongs to the Maf family. YceF subfamily. A divalent metal cation is required as a cofactor.

Its subcellular location is the cytoplasm. It catalyses the reaction N(7)-methyl-GTP + H2O = N(7)-methyl-GMP + diphosphate + H(+). Nucleoside triphosphate pyrophosphatase that hydrolyzes 7-methyl-GTP (m(7)GTP). May have a dual role in cell division arrest and in preventing the incorporation of modified nucleotides into cellular nucleic acids. This Vibrio cholerae serotype O1 (strain ATCC 39315 / El Tor Inaba N16961) protein is 7-methyl-GTP pyrophosphatase.